Consider the following 209-residue polypeptide: Octanoyltransferase (209 aa).

In terms of domain architecture, BPL/LPL catalytic spans 30-209; sequence GEAPEAVYLV…LEVEFIKIFK (180 aa). Residues 69-76, 143-145, and 156-158 contribute to the substrate site; these read RGGKFTFH, AIG, and GIA. Catalysis depends on cysteine 174, which acts as the Acyl-thioester intermediate.

Belongs to the LipB family.

Its subcellular location is the cytoplasm. It carries out the reaction octanoyl-[ACP] + L-lysyl-[protein] = N(6)-octanoyl-L-lysyl-[protein] + holo-[ACP] + H(+). The protein operates within protein modification; protein lipoylation via endogenous pathway; protein N(6)-(lipoyl)lysine from octanoyl-[acyl-carrier-protein]: step 1/2. Its function is as follows. Catalyzes the transfer of endogenously produced octanoic acid from octanoyl-acyl-carrier-protein onto the lipoyl domains of lipoate-dependent enzymes. Lipoyl-ACP can also act as a substrate although octanoyl-ACP is likely to be the physiological substrate. The sequence is that of Octanoyltransferase from Rickettsia bellii (strain OSU 85-389).